Here is a 355-residue protein sequence, read N- to C-terminus: Phosphate acyltransferase (355 aa).

It belongs to the PlsX family. As to quaternary structure, homodimer. Probably interacts with PlsY.

It localises to the cytoplasm. It catalyses the reaction a fatty acyl-[ACP] + phosphate = an acyl phosphate + holo-[ACP]. It participates in lipid metabolism; phospholipid metabolism. Its function is as follows. Catalyzes the reversible formation of acyl-phosphate (acyl-PO(4)) from acyl-[acyl-carrier-protein] (acyl-ACP). This enzyme utilizes acyl-ACP as fatty acyl donor, but not acyl-CoA. This chain is Phosphate acyltransferase, found in Rhodospirillum centenum (strain ATCC 51521 / SW).